A 68-amino-acid polypeptide reads, in one-letter code: Protein SlyX homolog (68 aa).

It belongs to the SlyX family.

This Pseudomonas entomophila (strain L48) protein is Protein SlyX homolog.